The chain runs to 116 residues: Large ribosomal subunit protein uL18 (116 aa).

The protein belongs to the universal ribosomal protein uL18 family. As to quaternary structure, part of the 50S ribosomal subunit; part of the 5S rRNA/L5/L18/L25 subcomplex. Contacts the 5S and 23S rRNAs.

Functionally, this is one of the proteins that bind and probably mediate the attachment of the 5S RNA into the large ribosomal subunit, where it forms part of the central protuberance. The polypeptide is Large ribosomal subunit protein uL18 (Caulobacter vibrioides (strain ATCC 19089 / CIP 103742 / CB 15) (Caulobacter crescentus)).